The chain runs to 158 residues: Transcription elongation factor GreA (158 aa).

Belongs to the GreA/GreB family.

Its function is as follows. Necessary for efficient RNA polymerase transcription elongation past template-encoded arresting sites. The arresting sites in DNA have the property of trapping a certain fraction of elongating RNA polymerases that pass through, resulting in locked ternary complexes. Cleavage of the nascent transcript by cleavage factors such as GreA or GreB allows the resumption of elongation from the new 3'terminus. GreA releases sequences of 2 to 3 nucleotides. The polypeptide is Transcription elongation factor GreA (Methylobacterium sp. (strain 4-46)).